The sequence spans 346 residues: Heparan sulfate glucosamine 3-O-sulfotransferase 5 (346 aa).

Residues 1–12 (MLFKQQVWLRQK) lie on the Cytoplasmic side of the membrane. A helical; Signal-anchor for type II membrane protein transmembrane segment spans residues 13–32 (LLVLGSLAVGSLLYLVARVG). The Lumenal portion of the chain corresponds to 33–346 (SLDRLQPICP…QITGRTLNWP (314 aa)). A glycan (N-linked (GlcNAc...) asparagine) is linked at asparagine 75. A 3'-phosphoadenylyl sulfate-binding site is contributed by 100–104 (KGGTR). Substrate contacts are provided by residues 122-128 (EIHFFDN) and 155-158 (KSPA). Asparagine 173 carries N-linked (GlcNAc...) asparagine glycosylation. Arginine 183 and serine 191 together coordinate 3'-phosphoadenylyl sulfate. Asparagine 204 carries N-linked (GlcNAc...) asparagine glycosylation. 226 to 227 (YK) provides a ligand contact to substrate. Residue asparagine 287 is glycosylated (N-linked (GlcNAc...) asparagine). A 3'-phosphoadenylyl sulfate-binding site is contributed by tyrosine 293. An intrachain disulfide couples cysteine 294 to cysteine 304. 3'-phosphoadenylyl sulfate is bound at residue 309–313 (KGRIH).

Belongs to the sulfotransferase 1 family.

The protein resides in the golgi apparatus membrane. It catalyses the reaction alpha-D-glucosaminyl-[heparan sulfate](n) + 3'-phosphoadenylyl sulfate = 3-sulfo-alpha-D-glucosaminyl-[heparan sulfate](n) + adenosine 3',5'-bisphosphate + H(+). Functionally, sulfotransferase that utilizes 3'-phospho-5'-adenylyl sulfate (PAPS) to catalyze the transfer of a sulfo group to position 3 of glucosamine residues in heparan. Catalyzes the rate limiting step in the biosynthesis of heparan sulfate (HSact). This modification is a crucial step in the biosynthesis of anticoagulant heparan sulfate as it completes the structure of the antithrombin pentasaccharide binding site. Also generates GlcUA-GlcNS or IdoUA-GlcNS and IdoUA2S-GlcNH2. The polypeptide is Heparan sulfate glucosamine 3-O-sulfotransferase 5 (Hs3st5) (Mus musculus (Mouse)).